The sequence spans 58 residues: Large ribosomal subunit protein uL30 (58 aa).

It belongs to the universal ribosomal protein uL30 family. As to quaternary structure, part of the 50S ribosomal subunit.

This chain is Large ribosomal subunit protein uL30, found in Acinetobacter baumannii (strain AB307-0294).